The sequence spans 143 residues: Large ribosomal subunit protein uL15 (143 aa).

Residues 1–54 form a disordered region; it reads MELNSIKPAEGAKHAKRRVGRGIGSGLGKTAGRGHKGQKSRSGGYHKVGFEGGQ. Gly residues predominate over residues 21–31; the sequence is RGIGSGLGKTA.

It belongs to the universal ribosomal protein uL15 family. As to quaternary structure, part of the 50S ribosomal subunit.

Its function is as follows. Binds to the 23S rRNA. The sequence is that of Large ribosomal subunit protein uL15 from Paracidovorax citrulli (strain AAC00-1) (Acidovorax citrulli).